We begin with the raw amino-acid sequence, 220 residues long: HTH-type transcriptional repressor GlaR (220 aa).

Residues 1 to 69 (MTITSLDGYR…NQKGYRVASM (69 aa)) enclose the HTH gntR-type domain. Residues 29 to 48 (MSLLTSRYALGVGPLREALS) constitute a DNA-binding region (H-T-H motif).

Its subcellular location is the cytoplasm. With respect to regulation, the repressive effect at the glaH promoter site is specifically relieved upon glutarate binding. Negatively regulates the expression of the glaH-lhgD-gabDTP operon in a temporal manner during entry into stationary phase or during the first few hours of carbon starvation. Thereby is involved in the regulation of a L-lysine degradation pathway that proceeds via cadaverine, glutarate and L-2-hydroxyglutarate. Binds to two primary and two secondary sites in the promoter region of the glaH operon with the consensus sequences TTGTN5TTTT and ATGTN5TTTT of the primary sites, each separated by six nucleotides. The chain is HTH-type transcriptional repressor GlaR from Escherichia coli (strain K12).